Consider the following 720-residue polypeptide: Polyribonucleotide nucleotidyltransferase (720 aa).

Mg(2+) contacts are provided by Asp-485 and Asp-491. The 64-residue stretch at 552-615 (PRIHTIKINP…EAIRRIQALT (64 aa)) folds into the KH domain. The 69-residue stretch at 621–689 (GRIYEGKVTR…RQGRIRLSIK (69 aa)) folds into the S1 motif domain. The disordered stretch occupies residues 697–720 (PAAESVAESAPAQEAVVEQVPMTE). Over residues 698–720 (AAESVAESAPAQEAVVEQVPMTE) the composition is skewed to low complexity.

The protein belongs to the polyribonucleotide nucleotidyltransferase family. Component of the RNA degradosome, which is a multiprotein complex involved in RNA processing and mRNA degradation. Mg(2+) serves as cofactor.

It is found in the cytoplasm. The enzyme catalyses RNA(n+1) + phosphate = RNA(n) + a ribonucleoside 5'-diphosphate. Its function is as follows. Involved in mRNA degradation. Catalyzes the phosphorolysis of single-stranded polyribonucleotides processively in the 3'- to 5'-direction. The sequence is that of Polyribonucleotide nucleotidyltransferase from Tolumonas auensis (strain DSM 9187 / NBRC 110442 / TA 4).